Reading from the N-terminus, the 239-residue chain is Ribonuclease 3 (239 aa).

The RNase III domain maps to 11 to 133 (HAAIQKKLGY…MFAAVSFDAD (123 aa)). Position 46 (E46) interacts with Mg(2+). D50 is an active-site residue. 2 residues coordinate Mg(2+): D119 and E122. The region spanning 160–230 (DGKTALQEAL…AKEALKWLEE (71 aa)) is the DRBM domain.

The protein belongs to the ribonuclease III family. As to quaternary structure, homodimer. Mg(2+) serves as cofactor.

Its subcellular location is the cytoplasm. It catalyses the reaction Endonucleolytic cleavage to 5'-phosphomonoester.. In terms of biological role, digests double-stranded RNA. Involved in the processing of primary rRNA transcript to yield the immediate precursors to the large and small rRNAs (23S and 16S). Also processes some mRNAs, and tRNAs when they are encoded in the rRNA operon. CRISPR (clustered regularly interspaced short palindromic repeat) is an adaptive immune system that provides protection against mobile genetic elements (viruses, transposable elements and conjugative plasmids). CRISPR clusters contain spacers, sequences complementary to antecedent mobile elements, and target invading nucleic acids. CRISPR clusters are transcribed and processed into CRISPR RNA (crRNA). In this organism endogenous ribonuclease 3 and Cas9 are required for correct coprocessing of pre-crRNA and the trans-encoded small RNA (tracrRNA). Cas9, crRNA and tracRNA are required for cleavage of invading DNA. Involved in 3'-end processing but not 5'-end processing of crRNA and tracrRNA. The sequence is that of Ribonuclease 3 from Neisseria meningitidis serogroup C (strain 8013).